The sequence spans 509 residues: MDIRAAEISAILKEQIKNFGKEAEVSEVGQVLSVGDGIARVYGLDNVQAGEMVEFPGGIRGMALNLESDNVGVVIFGADRDIKEGDVVKRTGAIVDVPVGPELLGRVVDALGNPIDGKGPIKAKERRRVDVKAPGIIPRKSVHEPMSTGLKAIDALIPVGRGQRELVIGDRQTGKTAIILDTFLNQKPIHDNGPDKDKLYCVYVAVGQKRSTVAQFVKVLEERGALEYSIVVAATASDPAPMQYLAPFAGCAMGEYFRDNGQHALIGYDDLSKQAVAYRQMSLLLRRPPGREAYPGDVFYLHSRLLERAAKLNDENGAGSLTALPVIETQGNDVSAFIPTNVISITDGQIFLETNLFYQGIRPAVNVGLSVSRVGSSAQIKAMKQVAGSIKGELAQYREMAAFAQFGSDLDAATQRLLNRGARLTELLKQPQFSPLKTEEQVAVIYAGVNGYLDKLAVNQVGKFEEGLLASLRTEHKDVLEGIRNEKALTDDLKAKLKAAIDAFAKSFA.

169 to 176 (GDRQTGKT) serves as a coordination point for ATP.

It belongs to the ATPase alpha/beta chains family. In terms of assembly, F-type ATPases have 2 components, CF(1) - the catalytic core - and CF(0) - the membrane proton channel. CF(1) has five subunits: alpha(3), beta(3), gamma(1), delta(1), epsilon(1). CF(0) has three main subunits: a(1), b(2) and c(9-12). The alpha and beta chains form an alternating ring which encloses part of the gamma chain. CF(1) is attached to CF(0) by a central stalk formed by the gamma and epsilon chains, while a peripheral stalk is formed by the delta and b chains.

The protein localises to the cell inner membrane. The catalysed reaction is ATP + H2O + 4 H(+)(in) = ADP + phosphate + 5 H(+)(out). Functionally, produces ATP from ADP in the presence of a proton gradient across the membrane. The alpha chain is a regulatory subunit. This chain is ATP synthase subunit alpha, found in Brucella canis (strain ATCC 23365 / NCTC 10854 / RM-666).